We begin with the raw amino-acid sequence, 449 residues long: UDP-N-acetylmuramoylalanine--D-glutamate ligase (449 aa).

Residue 118 to 124 (GTNGKTT) coordinates ATP.

It belongs to the MurCDEF family.

It is found in the cytoplasm. It catalyses the reaction UDP-N-acetyl-alpha-D-muramoyl-L-alanine + D-glutamate + ATP = UDP-N-acetyl-alpha-D-muramoyl-L-alanyl-D-glutamate + ADP + phosphate + H(+). It functions in the pathway cell wall biogenesis; peptidoglycan biosynthesis. In terms of biological role, cell wall formation. Catalyzes the addition of glutamate to the nucleotide precursor UDP-N-acetylmuramoyl-L-alanine (UMA). The sequence is that of UDP-N-acetylmuramoylalanine--D-glutamate ligase from Staphylococcus aureus (strain MSSA476).